Here is a 718-residue protein sequence, read N- to C-terminus: Catalase (718 aa).

Residues His-103 and Asn-176 contribute to the active site. Tyr-390 is a binding site for heme.

The protein belongs to the catalase family. Heme serves as cofactor.

Its subcellular location is the peroxisome matrix. The enzyme catalyses 2 H2O2 = O2 + 2 H2O. In terms of biological role, catalyzes the degradation of hydrogen peroxide (H(2)O(2)) generated by peroxisomal oxidases to water and oxygen, thereby protecting cells from the toxic effects of hydrogen peroxide. The chain is Catalase (CAT1) from Blumeria hordei (Barley powdery mildew).